A 309-amino-acid chain; its full sequence is Probable pyridoxal 5'-phosphate synthase subunit PDX1 (309 aa).

Asp40 lines the D-ribose 5-phosphate pocket. Lys97 serves as the catalytic Schiff-base intermediate with D-ribose 5-phosphate. Residue Gly169 participates in D-ribose 5-phosphate binding. Position 181 (Arg181) interacts with D-glyceraldehyde 3-phosphate. Residues Gly230 and 251–252 (GS) each bind D-ribose 5-phosphate.

This sequence belongs to the PdxS/SNZ family.

It catalyses the reaction aldehydo-D-ribose 5-phosphate + D-glyceraldehyde 3-phosphate + L-glutamine = pyridoxal 5'-phosphate + L-glutamate + phosphate + 3 H2O + H(+). It functions in the pathway cofactor biosynthesis; pyridoxal 5'-phosphate biosynthesis. Its function is as follows. Catalyzes the formation of pyridoxal 5'-phosphate from ribose 5-phosphate (RBP), glyceraldehyde 3-phosphate (G3P) and ammonia. The ammonia is provided by PDX2. Can also use ribulose 5-phosphate and dihydroxyacetone phosphate as substrates, resulting from enzyme-catalyzed isomerization of RBP and G3P, respectively. Also plays an indirect role in resistance to singlet oxygen-generating photosensitizers. The polypeptide is Probable pyridoxal 5'-phosphate synthase subunit PDX1 (PDX1) (Hevea brasiliensis (Para rubber tree)).